The following is a 363-amino-acid chain: MQTPTLGQLATENGAQVVGDPDLAIVGLAPLDQAGPGELSFLSNPLYLQQALDSQAGAVIVSAADLERVRAEGRADGRNWLVARNPYVCFARVAQRFDRAANTDTRTGIDPRATVAPDAVVPASCYIGPNVVIERGARLGERVRILANGYVGAQAEIGDDSLLYANVSVYHDCVVGARAILHSGVVIGADGFGFAPDIGATGVEYVKIPQTGRAVLGNDVEVGANTAIDRGAMADTVIEDGCKIDNQVQIAHNVRVGAHTVIAGCAAVSGSTRIGRFCVIGGAANFSGHLNIADRTTVSGGTSITKSITKPGGHFTSVFPFLPHGEWERNAAIVRGLTRLRERVVALERRLRGQAAGSQPSQD.

Catalysis depends on histidine 252, which acts as the Proton acceptor.

The protein belongs to the transferase hexapeptide repeat family. LpxD subfamily. In terms of assembly, homotrimer.

The catalysed reaction is a UDP-3-O-[(3R)-3-hydroxyacyl]-alpha-D-glucosamine + a (3R)-hydroxyacyl-[ACP] = a UDP-2-N,3-O-bis[(3R)-3-hydroxyacyl]-alpha-D-glucosamine + holo-[ACP] + H(+). It functions in the pathway bacterial outer membrane biogenesis; LPS lipid A biosynthesis. Catalyzes the N-acylation of UDP-3-O-acylglucosamine using 3-hydroxyacyl-ACP as the acyl donor. Is involved in the biosynthesis of lipid A, a phosphorylated glycolipid that anchors the lipopolysaccharide to the outer membrane of the cell. The polypeptide is UDP-3-O-acylglucosamine N-acyltransferase (Cupriavidus necator (strain ATCC 17699 / DSM 428 / KCTC 22496 / NCIMB 10442 / H16 / Stanier 337) (Ralstonia eutropha)).